The following is a 564-amino-acid chain: NAD-dependent malic enzyme (564 aa).

Tyr-104 (proton donor) is an active-site residue. NAD(+) is bound at residue Arg-157. The active-site Proton acceptor is the Lys-175. A divalent metal cation is bound by residues Glu-246, Asp-247, and Asp-270. NAD(+)-binding residues include Asp-270 and Asn-417.

Belongs to the malic enzymes family. Homotetramer. Requires Mg(2+) as cofactor. Mn(2+) serves as cofactor.

The catalysed reaction is (S)-malate + NAD(+) = pyruvate + CO2 + NADH. It carries out the reaction oxaloacetate + H(+) = pyruvate + CO2. The protein is NAD-dependent malic enzyme of Aeromonas hydrophila subsp. hydrophila (strain ATCC 7966 / DSM 30187 / BCRC 13018 / CCUG 14551 / JCM 1027 / KCTC 2358 / NCIMB 9240 / NCTC 8049).